The following is a 267-amino-acid chain: Heme-containing CO-sensing transcriptional regulator RcoM 2 (267 aa).

Residues 15-86 form the PAS domain; it reads RAETFQHKLE…KSRDKLRFLL (72 aa). Heme-binding residues include H74 and M104. The region spanning 161-266 is the HTH LytTR-type domain; the sequence is IPVYRKSRVI…TAQLKELLGV (106 aa).

Requires heme as cofactor.

It localises to the cytoplasm. In terms of biological role, one-component, b-type heme-containing aerobic sensor and transcriptional regulator that responds to CO by activating the expression of the oxidation operon cox. The sequence is that of Heme-containing CO-sensing transcriptional regulator RcoM 2 (rcoM2) from Paraburkholderia xenovorans (strain LB400).